Consider the following 286-residue polypeptide: Beta-lactamase SHV-13 (286 aa).

Residues 1–21 form the signal peptide; sequence MRYIRLCIISLLATLPLAVHA. S66 (acyl-ester intermediate) is an active-site residue. Residues C73 and C119 are joined by a disulfide bond. Residue E164 is the Proton acceptor of the active site. Position 230-232 (230-232) interacts with substrate; that stretch reads KTG.

It belongs to the class-A beta-lactamase family.

The enzyme catalyses a beta-lactam + H2O = a substituted beta-amino acid. Inhibited 16-fold better by the beta-lactamase inhibitor clavulanic acid than by tazobactam. Its function is as follows. Broad spectrum beta-lactamase which hydrolyzes penicillins, as well as cephalosporins except cephamycins. Also hydrolyzes aztreonam, but not imipenem. Confers highly resistance to ceftazidime, cefotaxime, aztreonam and piperacillin. This Klebsiella pneumoniae protein is Beta-lactamase SHV-13 (bla).